The chain runs to 276 residues: Secreted LysM effector LysM10 (276 aa).

The first 22 residues, 1 to 22 (MLLSLVKFGILSVFLLAQEAVA), serve as a signal peptide directing secretion. N27, N104, and N140 each carry an N-linked (GlcNAc...) asparagine glycan. The LysM domain occupies 219–264 (KTYIAKEDDTCKSISEAQSISTDRLVEVNHLDYSCSSLTSGTALCI). N267 is a glycosylation site (N-linked (GlcNAc...) asparagine).

It belongs to the secreted LysM effector family.

Its subcellular location is the secreted. In terms of biological role, secreted LysM effector that might have a role in sequestration of chitin oligosaccharides (breakdown products of fungal cell walls that are released during invasion and act as triggers of host immunity) to dampen host defense. This Penicillium expansum (Blue mold rot fungus) protein is Secreted LysM effector LysM10.